We begin with the raw amino-acid sequence, 211 residues long: Pyridoxine/pyridoxamine 5'-phosphate oxidase (211 aa).

Substrate contacts are provided by residues 7–10 (RREY) and Lys65. Residues 60–65 (RIVLLK), 75–76 (YT), Arg81, Lys82, and Gln104 each bind FMN. 3 residues coordinate substrate: Tyr122, Arg126, and Ser130. FMN is bound by residues 139–140 (QS) and Trp184. 190–192 (RLH) is a substrate binding site. Arg194 provides a ligand contact to FMN.

It belongs to the pyridoxamine 5'-phosphate oxidase family. In terms of assembly, homodimer. The cofactor is FMN.

It catalyses the reaction pyridoxamine 5'-phosphate + O2 + H2O = pyridoxal 5'-phosphate + H2O2 + NH4(+). The enzyme catalyses pyridoxine 5'-phosphate + O2 = pyridoxal 5'-phosphate + H2O2. It participates in cofactor metabolism; pyridoxal 5'-phosphate salvage; pyridoxal 5'-phosphate from pyridoxamine 5'-phosphate: step 1/1. Its pathway is cofactor metabolism; pyridoxal 5'-phosphate salvage; pyridoxal 5'-phosphate from pyridoxine 5'-phosphate: step 1/1. Catalyzes the oxidation of either pyridoxine 5'-phosphate (PNP) or pyridoxamine 5'-phosphate (PMP) into pyridoxal 5'-phosphate (PLP). The sequence is that of Pyridoxine/pyridoxamine 5'-phosphate oxidase from Vibrio cholerae serotype O1 (strain ATCC 39315 / El Tor Inaba N16961).